The primary structure comprises 106 residues: Large ribosomal subunit protein uL23 (106 aa).

It belongs to the universal ribosomal protein uL23 family. Part of the 50S ribosomal subunit. Contacts protein L29, and trigger factor when it is bound to the ribosome.

One of the early assembly proteins it binds 23S rRNA. One of the proteins that surrounds the polypeptide exit tunnel on the outside of the ribosome. Forms the main docking site for trigger factor binding to the ribosome. The sequence is that of Large ribosomal subunit protein uL23 from Acinetobacter baylyi (strain ATCC 33305 / BD413 / ADP1).